Consider the following 1575-residue polypeptide: Laminin subunit gamma-3 (1575 aa).

A signal peptide spans 1 to 19 (MAAAALLLGLALLAPRAAG). One can recognise a Laminin N-terminal domain in the interval 31–270 (RPQRCLPVFE…AVSDFSVGGR (240 aa)). Residues Asn87 and Asn119 are each glycosylated (N-linked (GlcNAc...) asparagine). Cystine bridges form between Cys271–Cys280, Cys273–Cys290, Cys292–Cys301, Cys304–Cys324, Cys327–Cys336, Cys329–Cys352, Cys355–Cys364, Cys367–Cys380, Cys383–Cys395, Cys385–Cys401, Cys403–Cys412, Cys415–Cys427, Cys430–Cys441, Cys432–Cys448, Cys450–Cys459, and Cys462–Cys477. 4 consecutive Laminin EGF-like domains span residues 271–326 (CKCN…ECLP), 327–382 (CNCS…PCQP), 383–429 (CDCQ…GCRP), and 430–479 (CTCN…GCSS). Asn295 is a glycosylation site (N-linked (GlcNAc...) asparagine). A glycan (N-linked (GlcNAc...) asparagine) is linked at Asn328. Residues 480-489 (CFCYGHSKVC) enclose the Laminin EGF-like 5; first part domain. The region spanning 499 to 672 (HILSDFHQGA…LSPPASWVEI (174 aa)) is the Laminin IV type A domain. The N-linked (GlcNAc...) asparagine glycan is linked to Asn631. Positions 673 to 706 (CSCPTGYTGQFCESCAPGYKREMPQGGPYASCVP) constitute a Laminin EGF-like 5; second part domain. Disulfide bonds link Cys707–Cys715, Cys709–Cys722, Cys724–Cys733, Cys736–Cys752, Cys755–Cys763, Cys757–Cys774, Cys777–Cys786, Cys789–Cys807, Cys810–Cys824, Cys812–Cys831, Cys834–Cys843, Cys846–Cys863, Cys866–Cys880, Cys868–Cys887, Cys889–Cys898, Cys901–Cys914, Cys917–Cys929, Cys919–Cys936, Cys938–Cys947, Cys950–Cys962, Cys965–Cys977, Cys967–Cys983, Cys985–Cys994, and Cys997–Cys1010. 6 consecutive Laminin EGF-like domains span residues 707 to 754 (CTCN…DCQP), 755 to 809 (CPCP…PCHQ), 810 to 865 (CQCS…KCMP), 866 to 916 (CSCH…GCRS), 917 to 964 (CKCH…GCRA), and 965 to 1013 (CRCS…CQQC). Asn837 carries N-linked (GlcNAc...) asparagine glycosylation. The N-linked (GlcNAc...) asparagine glycan is linked to Asn980. The interval 1014 to 1575 (PSCYALVKEE…SLPENCASWQ (562 aa)) is domain II and I. Residues 1059–1061 (RGD) carry the Cell attachment site motif. Positions 1073-1134 (REAFLEQMMS…SEEEILHAAA (62 aa)) form a coiled coil. A glycan (N-linked (GlcNAc...) asparagine) is linked at Asn1185. The stretch at 1201–1228 (LETQRDLEDRYQEVQAAQKALRTAVAEV) forms a coiled coil. Positions 1378-1399 (KQAERMLGNAAPLSSSAKKKGR) are disordered. Coiled coils occupy residues 1410 to 1492 (KLAK…LARL) and 1523 to 1567 (GSLQ…LHSL).

As to quaternary structure, laminin is a complex glycoprotein, consisting of three different polypeptide chains (alpha, beta, gamma), which are bound to each other by disulfide bonds into a cross-shaped molecule comprising one long and three short arms with globules at each end. Gamma-3 is a subunit of laminin-12 (laminin-213), laminin-14 (laminin-423) and laminin-15 (laminin-523). As to expression, broadly expressed in: skin, heart, lung, and the reproductive tracts.

It localises to the secreted. The protein localises to the extracellular space. The protein resides in the extracellular matrix. It is found in the basement membrane. Its function is as follows. Binding to cells via a high affinity receptor, laminin is thought to mediate the attachment, migration and organization of cells into tissues during embryonic development by interacting with other extracellular matrix components. The protein is Laminin subunit gamma-3 (LAMC3) of Homo sapiens (Human).